Consider the following 170-residue polypeptide: dCTP pyrophosphatase 1 (170 aa).

The tract at residues 1–25 (MSQAGTGVCGNGGQEDSAAAGPFSF) is disordered. An N-acetylserine modification is found at serine 2. Residue serine 2 is modified to Phosphoserine. Substrate-binding positions include histidine 38 and 47–51 (WEQFH). The Mg(2+) site is built by glutamate 63 and glutamate 66. Tryptophan 73 serves as a coordination point for substrate. Mg(2+) contacts are provided by glutamate 95 and aspartate 98. Tyrosine 102 is a substrate binding site. A disordered region spans residues 149-170 (LSENEAVGSGDPASELGNQAST).

As to quaternary structure, homotetramer. Mg(2+) serves as cofactor.

Its subcellular location is the cytoplasm. It localises to the cytosol. The enzyme catalyses dCTP + H2O = dCMP + diphosphate + H(+). Hydrolyzes deoxynucleoside triphosphates (dNTPs) to the corresponding nucleoside monophosphates. Has a strong preference for dCTP and its analogs including 5-iodo-dCTP and 5-methyl-dCTP for which it may even have a higher efficiency. May protect DNA or RNA against the incorporation of these genotoxic nucleotide analogs through their catabolism. The polypeptide is dCTP pyrophosphatase 1 (Rattus norvegicus (Rat)).